The primary structure comprises 461 residues: Fumarate hydratase class II (461 aa).

Residues 99-101, 130-133, 140-142, and T188 each bind substrate; these read SGT, HPND, and STN. The active-site Proton donor/acceptor is the H189. The active site involves S319. Substrate is bound by residues S320 and 325 to 327; that span reads KVN.

It belongs to the class-II fumarase/aspartase family. Fumarase subfamily. Homotetramer.

The protein localises to the cytoplasm. The catalysed reaction is (S)-malate = fumarate + H2O. It functions in the pathway carbohydrate metabolism; tricarboxylic acid cycle; (S)-malate from fumarate: step 1/1. Its function is as follows. Involved in the TCA cycle. Catalyzes the stereospecific interconversion of fumarate to L-malate. This chain is Fumarate hydratase class II, found in Prochlorococcus marinus subsp. pastoris (strain CCMP1986 / NIES-2087 / MED4).